Consider the following 131-residue polypeptide: Large ribosomal subunit protein bL21 (131 aa).

Over residues 106–116 the composition is skewed to basic and acidic residues; it reads TIDDMPKKEAA. A disordered region spans residues 106-131; sequence TIDDMPKKEAAPAKARRSTKKAAAAE.

Belongs to the bacterial ribosomal protein bL21 family. In terms of assembly, part of the 50S ribosomal subunit. Contacts protein L20.

Its function is as follows. This protein binds to 23S rRNA in the presence of protein L20. The sequence is that of Large ribosomal subunit protein bL21 from Koribacter versatilis (strain Ellin345).